Reading from the N-terminus, the 156-residue chain is Small ribosomal subunit protein uS7 (156 aa).

Belongs to the universal ribosomal protein uS7 family. As to quaternary structure, part of the 30S ribosomal subunit. Contacts proteins S9 and S11.

One of the primary rRNA binding proteins, it binds directly to 16S rRNA where it nucleates assembly of the head domain of the 30S subunit. Is located at the subunit interface close to the decoding center, probably blocks exit of the E-site tRNA. This is Small ribosomal subunit protein uS7 from Shewanella amazonensis (strain ATCC BAA-1098 / SB2B).